The primary structure comprises 154 residues: SsrA-binding protein (154 aa).

The tract at residues 134–154 (KRQAIKERQTQREIQRELKER) is disordered.

The protein belongs to the SmpB family.

It is found in the cytoplasm. Required for rescue of stalled ribosomes mediated by trans-translation. Binds to transfer-messenger RNA (tmRNA), required for stable association of tmRNA with ribosomes. tmRNA and SmpB together mimic tRNA shape, replacing the anticodon stem-loop with SmpB. tmRNA is encoded by the ssrA gene; the 2 termini fold to resemble tRNA(Ala) and it encodes a 'tag peptide', a short internal open reading frame. During trans-translation Ala-aminoacylated tmRNA acts like a tRNA, entering the A-site of stalled ribosomes, displacing the stalled mRNA. The ribosome then switches to translate the ORF on the tmRNA; the nascent peptide is terminated with the 'tag peptide' encoded by the tmRNA and targeted for degradation. The ribosome is freed to recommence translation, which seems to be the essential function of trans-translation. This Synechococcus sp. (strain JA-2-3B'a(2-13)) (Cyanobacteria bacterium Yellowstone B-Prime) protein is SsrA-binding protein.